The following is a 194-amino-acid chain: Xanthine phosphoribosyltransferase (194 aa).

Xanthine-binding residues include Leu-20 and Asn-27. Residue 128 to 132 (ANGEA) coordinates 5-phospho-alpha-D-ribose 1-diphosphate. Xanthine is bound at residue Lys-156.

Belongs to the purine/pyrimidine phosphoribosyltransferase family. Xpt subfamily. As to quaternary structure, homodimer.

Its subcellular location is the cytoplasm. The catalysed reaction is XMP + diphosphate = xanthine + 5-phospho-alpha-D-ribose 1-diphosphate. The protein operates within purine metabolism; XMP biosynthesis via salvage pathway; XMP from xanthine: step 1/1. Converts the preformed base xanthine, a product of nucleic acid breakdown, to xanthosine 5'-monophosphate (XMP), so it can be reused for RNA or DNA synthesis. This chain is Xanthine phosphoribosyltransferase, found in Macrococcus caseolyticus (strain JCSC5402) (Macrococcoides caseolyticum).